The following is a 1198-amino-acid chain: Phosphatidylinositol-3,5-bisphosphate 3-phosphatase MTMR3 (1198 aa).

At serine 8 the chain carries Phosphoserine. One can recognise a Myotubularin phosphatase domain in the interval 155 to 576 (EHVTSRFKNE…RNLMLWSAVY (422 aa)). A compositionally biased stretch (polar residues) spans 265 to 280 (SRSSGSKLSTRNTSRD). The segment at 265–285 (SRSSGSKLSTRNTSRDFPNGG) is disordered. Asparagine 326, asparagine 351, and isoleucine 352 together coordinate a 1,2-diacyl-sn-glycero-3-phospho-(1D-myo-inositol-3,5-bisphosphate). Asparagine 326, asparagine 351, and isoleucine 352 together coordinate a 1,2-diacyl-sn-glycero-3-phospho-(1D-myo-inositol-3-phosphate). Residue cysteine 413 is the Phosphocysteine intermediate of the active site. Residues serine 414, aspartate 415, glycine 416, tryptophan 417, aspartate 418, arginine 419, lysine 455, and arginine 459 each contribute to the a 1,2-diacyl-sn-glycero-3-phospho-(1D-myo-inositol-3,5-bisphosphate) site. Residues serine 414, aspartate 415, glycine 416, tryptophan 417, aspartate 418, and arginine 419 each contribute to the a 1,2-diacyl-sn-glycero-3-phospho-(1D-myo-inositol-3-phosphate) site. A 1,2-diacyl-sn-glycero-3-phospho-(1D-myo-inositol-3-phosphate) is bound at residue arginine 459. Residues 590–612 (CAPYPAPGTSPDDPPLSRLPKTR) form a disordered region. A compositionally biased stretch (pro residues) spans 593–603 (YPAPGTSPDDP). A phosphoserine mark is found at serine 613, serine 633, serine 647, and serine 651. 3 disordered regions span residues 650 to 669 (LSSL…LGKP), 716 to 735 (EGKE…PEAS), and 855 to 891 (KSVS…SLVE). The span at 716-732 (EGKEDPLLEKESRRKTP) shows a compositional bias: basic and acidic residues. Threonine 731 carries the phosphothreonine modification. Residues serine 906 and serine 909 each carry the phosphoserine modification. Disordered stretches follow at residues 933–974 (ETEN…SRQL) and 993–1019 (WLHS…DDDG). Over residues 999 to 1010 (GRPSATSSPDQP) the composition is skewed to polar residues. Residues 1029-1062 (QRLRQIESGHQQEVETLKKQVQELKSRLESQYLT) adopt a coiled-coil conformation. The residue at position 1064 (serine 1064) is a Phosphoserine. Residues 1119 to 1179 (DHLAAHCYAC…VCKSCYSSLH (61 aa)) form an FYVE-type zinc finger. Residues cysteine 1125, cysteine 1128, cysteine 1141, cysteine 1144, cysteine 1149, cysteine 1152, cysteine 1171, and cysteine 1174 each coordinate Zn(2+).

It belongs to the protein-tyrosine phosphatase family. Non-receptor class myotubularin subfamily. In terms of assembly, forms heterodimers with MTMR4 that recruit both CEP55 and PLK1; occurs during early mitosis, regulates the phosphorylation of CEP55 by PLK1 and its recruitment to the midbody where it mediates cell abscission. Post-translationally, phosphorylated by CDK1 during mitosis.

It localises to the cytoplasm. It is found in the cytosol. The protein localises to the membrane. The catalysed reaction is a 1,2-diacyl-sn-glycero-3-phospho-(1D-myo-inositol-3,5-bisphosphate) + H2O = a 1,2-diacyl-sn-glycero-3-phospho-(1D-myo-inositol-5-phosphate) + phosphate. It catalyses the reaction a 1,2-diacyl-sn-glycero-3-phospho-(1D-myo-inositol-3-phosphate) + H2O = a 1,2-diacyl-sn-glycero-3-phospho-(1D-myo-inositol) + phosphate. The enzyme catalyses 1,2-dihexadecanoyl-sn-glycero-3-phospho-(1D-myo-inositol-3-phosphate) + H2O = 1,2-dihexadecanoyl-sn-glycero-3-phospho-(1D-myo-inositol) + phosphate. It carries out the reaction 1,2-dioctanoyl-sn-glycero-3-phospho-(1-D-myo-inositol-3-phosphate) + H2O = 1,2-dioctanoyl-sn-glycero-3-phospho-(1D-myo-inositol) + phosphate. The catalysed reaction is 1,2-dihexadecanoyl-sn-glycero-3-phospho-(1D-myo-inositol-3,5-phosphate) + H2O = 1,2-dihexadecanoyl-sn-glycero-3-phospho-(1D-myo-inositol-5-phosphate) + phosphate. Its function is as follows. Lipid phosphatase that specifically dephosphorylates the D-3 position of phosphatidylinositol 3-phosphate and phosphatidylinositol 3,5-bisphosphate, generating phosphatidylinositol and phosphatidylinositol 5-phosphate. Decreases the levels of phosphatidylinositol 3-phosphate, a phospholipid found in cell membranes where it acts as key regulator of both cell signaling and intracellular membrane traffic. Could also have a molecular sequestering/adapter activity and regulate biological processes independently of its phosphatase activity. It includes the regulation of midbody abscission during mitotic cytokinesis. The chain is Phosphatidylinositol-3,5-bisphosphate 3-phosphatase MTMR3 from Homo sapiens (Human).